The chain runs to 484 residues: Probable D-lactate dehydrogenase, mitochondrial (484 aa).

The N-terminal 52 residues, methionine 1–glutamate 52, are a transit peptide targeting the mitochondrion. Lysine 36 carries the N6-acetyllysine modification. Positions arginine 62–alanine 242 constitute an FAD-binding PCMH-type domain. An N6-acetyllysine modification is found at lysine 292. Lysine 335 carries the post-translational modification N6-acetyllysine; alternate. Lysine 335 bears the N6-succinyllysine; alternate mark. An N6-acetyllysine mark is found at lysine 422 and lysine 449.

Belongs to the FAD-binding oxidoreductase/transferase type 4 family. In terms of assembly, interacts with CSRP3. FAD serves as cofactor. As to expression, readily detected in liver and kidney, with a weaker signal observed in heart, skeletal muscle, stomach, brain, and lung.

The protein localises to the mitochondrion. The catalysed reaction is (R)-lactate + 2 Fe(III)-[cytochrome c] = 2 Fe(II)-[cytochrome c] + pyruvate + 2 H(+). Its function is as follows. Involved in D-lactate, but not L-lactate catabolic process. This chain is Probable D-lactate dehydrogenase, mitochondrial, found in Mus musculus (Mouse).